A 324-amino-acid polypeptide reads, in one-letter code: Ribose-phosphate pyrophosphokinase 1 (324 aa).

ATP contacts are provided by residues 39–41 (DGE) and 98–99 (RQ). The Mg(2+) site is built by His-132 and Asp-174. The active site involves Lys-197. Residues Arg-199, Asp-223, and 227-231 (DTAGT) contribute to the D-ribose 5-phosphate site.

This sequence belongs to the ribose-phosphate pyrophosphokinase family. Class I subfamily. In terms of assembly, homohexamer. Mg(2+) serves as cofactor.

Its subcellular location is the cytoplasm. It carries out the reaction D-ribose 5-phosphate + ATP = 5-phospho-alpha-D-ribose 1-diphosphate + AMP + H(+). Its pathway is metabolic intermediate biosynthesis; 5-phospho-alpha-D-ribose 1-diphosphate biosynthesis; 5-phospho-alpha-D-ribose 1-diphosphate from D-ribose 5-phosphate (route I): step 1/1. Its function is as follows. Involved in the biosynthesis of the central metabolite phospho-alpha-D-ribosyl-1-pyrophosphate (PRPP) via the transfer of pyrophosphoryl group from ATP to 1-hydroxyl of ribose-5-phosphate (Rib-5-P). The protein is Ribose-phosphate pyrophosphokinase 1 of Lactococcus lactis subsp. lactis (strain IL1403) (Streptococcus lactis).